Here is a 243-residue protein sequence, read N- to C-terminus: Peptide deformylase, mitochondrial (243 aa).

A mitochondrion-targeting transit peptide spans 1–39 (MARLWGALSLWPLWAAVPWGGAAAVGVRACSSTAAPDGV). Substrate contacts are provided by Gly71, Pro169, and Gly171. The segment at 165 to 175 (LVTFPEGCESV) is hydrophobic dimerization interface. Residues Cys172 and His214 each contribute to the Co(2+) site. Residue Glu215 is part of the active site. Co(2+) is bound at residue His218.

It belongs to the polypeptide deformylase family. In terms of assembly, homodimer. Requires Co(2+) as cofactor. Ubiquitous.

It localises to the mitochondrion. The catalysed reaction is N-terminal N-formyl-L-methionyl-[peptide] + H2O = N-terminal L-methionyl-[peptide] + formate. Removes the formyl group from the N-terminal Met of newly synthesized proteins. This Homo sapiens (Human) protein is Peptide deformylase, mitochondrial.